The primary structure comprises 419 residues: Acyl-[acyl-carrier-protein] desaturase 6, chloroplastic (419 aa).

The transit peptide at 1-54 (MAATATMAMPLANRLRCKPNTNSSSPSRTLFGRRVTMISSSRWGSAVSGSAIMS) directs the protein to the chloroplast. Residues E151, E189, H192, E242, E277, and H280 each coordinate Fe cation.

This sequence belongs to the fatty acid desaturase type 2 family. In terms of assembly, homodimer. The cofactor is Fe(2+).

The protein resides in the plastid. The protein localises to the chloroplast. The protein operates within lipid metabolism; fatty acid metabolism. In terms of biological role, introduces a cis double bond in the acyl chain of an acyl-[acyl-carrier protein]. The sequence is that of Acyl-[acyl-carrier-protein] desaturase 6, chloroplastic from Oryza sativa subsp. japonica (Rice).